The chain runs to 575 residues: Hemagglutinin-neuraminidase (575 aa).

Residues 1–10 (MDGDRGKRDS) are compositionally biased toward basic and acidic residues. The interval 1 to 27 (MDGDRGKRDSYWSTSPSGSTTKPASGW) is disordered. Over 1–37 (MDGDRGKRDSYWSTSPSGSTTKPASGWERSSKADTWL) the chain is Intravirion. The segment at 10–14 (SYWST) is incorporation in virion. Positions 11 to 23 (YWSTSPSGSTTKP) are enriched in polar residues. The helical; Signal-anchor for type II membrane protein transmembrane segment at 38-58 (LILSFTQWALSIATVIICIII) threads the bilayer. The interaction with F protein stretch occupies residues 59–140 (SARQGYSMKE…RQELTQHCES (82 aa)). The Virion surface portion of the chain corresponds to 59–575 (SARQGYSMKE…SIPKLCKAES (517 aa)). Residue asparagine 77 is glycosylated (N-linked (GlcNAc...) asparagine; by host). Intrachain disulfides connect cysteine 192-cysteine 216, cysteine 258-cysteine 271, cysteine 357-cysteine 469, and cysteine 463-cysteine 473. Positions 254–259 (NRKSCS) are involved in neuraminidase activity. Asparagine 499 and asparagine 511 each carry an N-linked (GlcNAc...) asparagine; by host glycan. A disulfide bond links cysteine 535 and cysteine 544.

This sequence belongs to the paramyxoviruses hemagglutinin-neuraminidase family. In terms of assembly, homotetramer; composed of disulfide-linked homodimers. Interacts with F protein trimer. N-glycosylated; glycans consist of a mixture of high mannose-type oligosaccharides and of complex-type oligosaccharides.

The protein resides in the virion membrane. It localises to the host cell membrane. It carries out the reaction Hydrolysis of alpha-(2-&gt;3)-, alpha-(2-&gt;6)-, alpha-(2-&gt;8)- glycosidic linkages of terminal sialic acid residues in oligosaccharides, glycoproteins, glycolipids, colominic acid and synthetic substrates.. Functionally, attaches the virus to sialic acid-containing cell receptors and thereby initiating infection. Binding of HN protein to the receptor induces a conformational change that allows the F protein to trigger virion/cell membranes fusion. Its function is as follows. Neuraminidase activity ensures the efficient spread of the virus by dissociating the mature virions from the neuraminic acid containing glycoproteins. The chain is Hemagglutinin-neuraminidase (HN) from Sendai virus (strain Z) (SeV).